The sequence spans 199 residues: MANVRARIELMVGQKSNIPAEMLSFEGLETEKEHVAVVFNQADKHQSTPLVRMHSECLTGDVFHSSRCDCGEQLEETINRMSESGGIILYLRQEGRGIGLYNKLDAYELQSQGMNTYEANNHLGFGDDLRDFKEAAQMLEALNISKIKLVTNNPKKIEDIKNYGIEIDEVVNTLAHVKQGNEHYLHSKAAHGHKLNFDK.

52–56 (RMHSE) serves as a coordination point for GTP. Residues Cys57, Cys68, and Cys70 each coordinate Zn(2+). Residues Gln73, 94–96 (EGR), and Thr116 contribute to the GTP site. Residue Asp128 is the Proton acceptor of the active site. Arg130 acts as the Nucleophile in catalysis. The GTP site is built by Thr151 and Lys156.

It belongs to the GTP cyclohydrolase II family. Requires Zn(2+) as cofactor.

The catalysed reaction is GTP + 4 H2O = 2,5-diamino-6-hydroxy-4-(5-phosphoribosylamino)-pyrimidine + formate + 2 phosphate + 3 H(+). It participates in cofactor biosynthesis; riboflavin biosynthesis; 5-amino-6-(D-ribitylamino)uracil from GTP: step 1/4. Its function is as follows. Catalyzes the conversion of GTP to 2,5-diamino-6-ribosylamino-4(3H)-pyrimidinone 5'-phosphate (DARP), formate and pyrophosphate. The protein is GTP cyclohydrolase-2 of Aliivibrio fischeri (strain MJ11) (Vibrio fischeri).